The sequence spans 235 residues: Clathrin light chain A (235 aa).

Residues 1 to 32 are disordered; it reads MAELDPFGAPAGAPGGPALGNGVAGAGEEDPA. Gly residues predominate over residues 13 to 25; the sequence is APGGPALGNGVAG. The tract at residues 99–161 is involved in binding clathrin heavy chain; the sequence is VDRLQSEPES…QLQKTKANNR (63 aa). Phosphoserine occurs at positions 104 and 193. K210 carries the post-translational modification N6-acetyllysine. S223 is subject to Phosphoserine. Residue K229 is modified to N6-acetyllysine.

The protein belongs to the clathrin light chain family. Clathrin coats are formed from molecules containing 3 heavy chains and 3 light chains. Interacts with CALY; the interaction stimulates clathrin self-assembly and clathrin-mediated endocytosis. Interacts with CKAP5 and TACC3 forming the TACC3/ch-TOG/clathrin complex located at spindle inter-microtubules bridges; the complex implicates clathrin triskelions.

It localises to the cytoplasmic vesicle membrane. Its subcellular location is the membrane. The protein resides in the coated pit. The protein localises to the cytoplasm. It is found in the cytoskeleton. It localises to the spindle. Clathrin is the major protein of the polyhedral coat of coated pits and vesicles. Acts as a component of the TACC3/ch-TOG/clathrin complex proposed to contribute to stabilization of kinetochore fibers of the mitotic spindle by acting as inter-microtubule bridge. The protein is Clathrin light chain A (Clta) of Mus musculus (Mouse).